A 636-amino-acid chain; its full sequence is MSKVIGIDLGTTNSCVAIMEGGEPIVIANAEGSRTTPSMVAITDSGERLVGQQAKRQAVTNPENTLFAIKRLIGRKFESEAVKKDIAISPFKIVKADNADAWVEVRGQKYSPPEISAMVLQKMKKTAEDYLGETVTDAVITVPAYFDDSQRQATKDAGKIAGLNVLRIINEPTAAALAYGLDKKKDEKIAVFDLGGGTFDISILELGEGVFEVKSTNGDTFLGGEDFDQNVIDWIADEFKKDQGIDLRNDKMALQRLKEAAEKAKCELSSSMETDINLPFITADASGPKHLNLKLTRAKLEAICANLIDKLEGPCRTALKDAGLSPSDIDEVILVGGMTRMPIVQKRVQDIFGKVPNRGVNPDEVVAIGAAIQGGVLKGDVKDVLLLDVTPLSLGIETLGGVMTRLIEKNSTIPCRKSQIFSTAADNQPAVSIHVLQGEREMAGDNKTLGNFELTGIPAAPRGVPQIEVTFDIDANGIVHVSAKDLGTGKEQSIRITASSGLSKEEIDKMVREAESHASEDKKKRELIEARNQADSLVYSTEKSLSEFGDKIDAAEKQKIEEGLAALKKAMEGNDADAIKKASDELMQASHKLAEAVYAKAQPAGEEQAGAAAHEGEAKGEKVVDADFEEVKEDKK.

Threonine 198 bears the Phosphothreonine; by autocatalysis mark. Residues 602–613 (QPAGEEQAGAAA) are compositionally biased toward low complexity. The tract at residues 602–636 (QPAGEEQAGAAAHEGEAKGEKVVDADFEEVKEDKK) is disordered. Basic and acidic residues predominate over residues 614-625 (HEGEAKGEKVVD). Residues 626–636 (ADFEEVKEDKK) are compositionally biased toward acidic residues.

The protein belongs to the heat shock protein 70 family.

Its function is as follows. Acts as a chaperone. In Geotalea daltonii (strain DSM 22248 / JCM 15807 / FRC-32) (Geobacter daltonii), this protein is Chaperone protein DnaK.